The primary structure comprises 330 residues: MTHFNKGPSYGLSAEVKNKIASKYDQQAEEDLRNWIEEVTGMGIGTNFQLGLKDGIILCELINKLQPGSVKKVNESSLNWPQLENIGNFIKAIQAYGMKPHDIFEANDLFENGNMTQVQTTLVALAGLAKTKGFHTTIDIGVKYAEKQTRRFDEGKLKAGQSVIGLQMGTNKCASQAGMTAYGTRRHLYDPKMQTDKPFDQTTISLQMGTNKGASQAGMSAPGTRRDIYDQKLTLQPVDNSTISLQMGTNKVASQKGMSVYGLGRQVYDPKYCAAPTEPVIHNGSQGTGTNGSEISDSDYQAEYPDEYHGEYPDEYPREYQYGDDQGIDY.

K23 is subject to N6-acetyllysine. The 105-residue stretch at 26-130 (QQAEEDLRNW…TLVALAGLAK (105 aa)) folds into the Calponin-homology (CH) domain. Position 158 is an N6-methyllysine (K158). 3 Calponin-like repeats span residues 164 to 189 (IGLQ…RHLY), 204 to 229 (ISLQ…RDIY), and 243 to 268 (ISLQ…RQVY). Residues 279 to 330 (PVIHNGSQGTGTNGSEISDSDYQAEYPDEYHGEYPDEYPREYQYGDDQGIDY) form a disordered region. The segment covering 306–318 (DEYHGEYPDEYPR) has biased composition (basic and acidic residues).

Belongs to the calponin family.

Thin filament-associated protein that is implicated in the regulation and modulation of smooth muscle contraction. It is capable of binding to actin, calmodulin and tropomyosin. The interaction of calponin with actin inhibits the actomyosin Mg-ATPase activity. This is Calponin-3 (Cnn3) from Rattus norvegicus (Rat).